We begin with the raw amino-acid sequence, 404 residues long: 1-deoxy-D-xylulose 5-phosphate reductoisomerase (404 aa).

Positions 10, 11, 12, 13, 36, 37, 38, and 124 each coordinate NADPH. Residue Lys-125 participates in 1-deoxy-D-xylulose 5-phosphate binding. Position 126 (Glu-126) interacts with NADPH. Asp-150 is a Mn(2+) binding site. Residues Ser-151, Glu-152, Ser-186, and His-209 each contribute to the 1-deoxy-D-xylulose 5-phosphate site. Glu-152 is a Mn(2+) binding site. An NADPH-binding site is contributed by Gly-215. 1-deoxy-D-xylulose 5-phosphate contacts are provided by Ser-222, Asn-227, Lys-228, and Glu-231. Mn(2+) is bound at residue Glu-231.

This sequence belongs to the DXR family. In terms of assembly, homodimer. It depends on Mg(2+) as a cofactor. The cofactor is Mn(2+).

The catalysed reaction is 2-C-methyl-D-erythritol 4-phosphate + NADP(+) = 1-deoxy-D-xylulose 5-phosphate + NADPH + H(+). Its pathway is isoprenoid biosynthesis; isopentenyl diphosphate biosynthesis via DXP pathway; isopentenyl diphosphate from 1-deoxy-D-xylulose 5-phosphate: step 1/6. Catalyzes the NADPH-dependent rearrangement and reduction of 1-deoxy-D-xylulose-5-phosphate (DXP) to 2-C-methyl-D-erythritol 4-phosphate (MEP). This is 1-deoxy-D-xylulose 5-phosphate reductoisomerase from Erwinia tasmaniensis (strain DSM 17950 / CFBP 7177 / CIP 109463 / NCPPB 4357 / Et1/99).